The sequence spans 466 residues: Asparagine--tRNA ligase (466 aa).

Belongs to the class-II aminoacyl-tRNA synthetase family. As to quaternary structure, homodimer.

It is found in the cytoplasm. The enzyme catalyses tRNA(Asn) + L-asparagine + ATP = L-asparaginyl-tRNA(Asn) + AMP + diphosphate + H(+). The polypeptide is Asparagine--tRNA ligase (Vibrio parahaemolyticus serotype O3:K6 (strain RIMD 2210633)).